Here is a 310-residue protein sequence, read N- to C-terminus: Deoxyribonuclease gamma (310 aa).

An N-terminal signal peptide occupies residues 1 to 25 (MSLHPASPRLASLLLFILALHDTLA). The short motif at 40–56 (KKENHEAMDIIVKIIKR) is the Bipartite nuclear localization signal element. Catalysis depends on residues Glu105 and His160. A disulfide bond links Cys199 and Cys236. Residues 289 to 310 (SRAFTNNRKSVSLKKRKKGNRS) are not required for free DNA-nuclease activity but required for activity towards liposome-coated DNA. The Nuclear localization signal motif lies at 301 to 307 (LKKRKKG).

It belongs to the DNase I family. It depends on Ca(2+) as a cofactor. The cofactor is Mg(2+). Poly-ADP-ribosylated by PARP1. ADP-ribosylation negatively regulates enzymatic activity during apoptosis. Expressed at high levels in liver, spleen and testes. Expressed at lower levels in heart, lungs, skeletal muscle and kidney. Not expressed in brain. Predominantly expressed in macrophages; at protein level. Secreted by mononuclear phagocytes.

The protein localises to the nucleus. Its subcellular location is the endoplasmic reticulum. The protein resides in the secreted. Inhibited by zinc. Inhibited by heparin and proteolysis by plasmin. Its function is as follows. Has DNA hydrolytic activity. Is capable of both single- and double-stranded DNA cleavage, producing DNA fragments with 3'-OH ends. Can cleave chromatin to nucleosomal units and cleaves nucleosomal and liposome-coated DNA. Acts in internucleosomal DNA fragmentation (INDF) during apoptosis and necrosis. The role in apoptosis includes myogenic and neuronal differentiation, and BCR-mediated clonal deletion of self-reactive B cells. Is active on chromatin in apoptotic cell-derived membrane-coated microparticles and thus suppresses anti-DNA autoimmunity. Together with DNASE1, plays a key role in degrading neutrophil extracellular traps (NETs). NETs are mainly composed of DNA fibers and are released by neutrophils to bind pathogens during inflammation. Degradation of intravascular NETs by DNASE1 and DNASE1L3 is required to prevent formation of clots that obstruct blood vessels and cause organ damage following inflammation. In Mus musculus (Mouse), this protein is Deoxyribonuclease gamma.